The sequence spans 156 residues: Putative type II restriction enzyme ApeKORF2002P (156 aa).

This sequence to M.jannaschii MJ1199.

The enzyme catalyses Endonucleolytic cleavage of DNA to give specific double-stranded fragments with terminal 5'-phosphates.. Functionally, a putative type II restriction enzyme, its methylase would be APE_2002. The polypeptide is Putative type II restriction enzyme ApeKORF2002P (Aeropyrum pernix (strain ATCC 700893 / DSM 11879 / JCM 9820 / NBRC 100138 / K1)).